Consider the following 312-residue polypeptide: 2-phosphoglycerate kinase (312 aa).

Residues 8 to 95 enclose the ATP-cone domain; it reads SRILVTDKEY…LWRRVLKKHS (88 aa).

This sequence belongs to the 2-phosphoglycerate kinase family. Requires a divalent metal cation as cofactor.

It catalyses the reaction (2R)-2-phosphoglycerate + ATP = (2R)-2,3-bisphosphoglycerate + ADP + H(+). It functions in the pathway thermoadapter biosynthesis; cyclic 2,3-diphosphoglycerate biosynthesis; cyclic 2,3-diphosphoglycerate from 2-phospho-D-glycerate: step 1/2. In terms of biological role, catalyzes the phosphorylation of 2-phosphoglycerate to 2,3-diphosphoglycerate. Involved in the biosynthesis of cyclic 2,3-bisphosphoglycerate, a thermoprotectant. In Methanococcus maripaludis (strain C7 / ATCC BAA-1331), this protein is 2-phosphoglycerate kinase.